The chain runs to 325 residues: GMP reductase (325 aa).

C174 (thioimidate intermediate) is an active-site residue. Position 203–226 (203–226 (LIADGGIRTHGDIAKSIRFGATMV)) interacts with NADP(+).

Belongs to the IMPDH/GMPR family. GuaC type 2 subfamily.

The catalysed reaction is IMP + NH4(+) + NADP(+) = GMP + NADPH + 2 H(+). Catalyzes the irreversible NADPH-dependent deamination of GMP to IMP. It functions in the conversion of nucleobase, nucleoside and nucleotide derivatives of G to A nucleotides, and in maintaining the intracellular balance of A and G nucleotides. This Pediococcus pentosaceus (strain ATCC 25745 / CCUG 21536 / LMG 10740 / 183-1w) protein is GMP reductase.